Here is a 95-residue protein sequence, read N- to C-terminus: Protein K6 (95 aa).

Residues 1 to 24 (MAPVHVLCCVSVLLATFYLTPTES) form the signal peptide.

In Human herpesvirus 8 type P (isolate GK18) (HHV-8), this protein is Protein K6 (K6).